A 468-amino-acid polypeptide reads, in one-letter code: Aspartate ammonia-lyase (468 aa).

Residues T99, S138, T139, N140, and T185 each contribute to the L-aspartate site. Positions 315 to 324 (GSSIMPGKVN) are SS loop. Catalysis depends on S316, which acts as the Proton acceptor. Positions 317 and 322 each coordinate L-aspartate.

Belongs to the class-II fumarase/aspartase family. Aspartase subfamily. In terms of assembly, homotetramer.

It carries out the reaction L-aspartate = fumarate + NH4(+). In terms of biological role, catalyzes the reversible conversion of L-aspartate to fumarate and ammonia. The sequence is that of Aspartate ammonia-lyase (aspA) from Helicobacter pylori (strain ATCC 700392 / 26695) (Campylobacter pylori).